A 250-amino-acid polypeptide reads, in one-letter code: tRNA (guanine-N(1)-)-methyltransferase (250 aa).

Residues glycine 116 and 136–141 (IGDYVL) each bind S-adenosyl-L-methionine.

It belongs to the RNA methyltransferase TrmD family. In terms of assembly, homodimer.

Its subcellular location is the cytoplasm. The enzyme catalyses guanosine(37) in tRNA + S-adenosyl-L-methionine = N(1)-methylguanosine(37) in tRNA + S-adenosyl-L-homocysteine + H(+). Functionally, specifically methylates guanosine-37 in various tRNAs. The sequence is that of tRNA (guanine-N(1)-)-methyltransferase from Pseudomonas putida (strain W619).